The following is a 1157-amino-acid chain: uncharacterized protein (1157 aa).

Basic and acidic residues predominate over residues 1-10; the sequence is MDPHWKRHDS. 3 disordered regions span residues 1–35, 159–233, and 478–498; these read MDPH…QRFG, QTTP…SVEP, and KNQS…GKGP. 2 stretches are compositionally biased toward low complexity: residues 18 to 31 and 181 to 197; these read SPSA…PSSA and SAGT…NPNF. Polar residues predominate over residues 208-228; the sequence is QEWQQSPLESPLSMHSLQESL. In terms of domain architecture, CSD2 spans 501-574; the sequence is VWFKPSDKRI…KVEYKAILHD (74 aa). The RNB domain occupies 608 to 921; the sequence is LRDKLTFMIG…ICVQRQLREA (314 aa). Positions 973–1030 constitute a DIS3L2 C-terminal domain; the sequence is GLVKHKAFVLAVDQEYIDIVIYEFGLERRISLDLLPLSNCDFNEQKHELYLSWRTNAS. A disordered region spans residues 1084–1113; the sequence is YSKARGNDSTSKTAKSSSGNQDISGDGKLH. Residues 1090 to 1106 show a composition bias toward polar residues; that stretch reads NDSTSKTAKSSSGNQDI.

This sequence belongs to the RNR ribonuclease family.

It localises to the cytoplasm. This is an uncharacterized protein from Schizosaccharomyces pombe (strain 972 / ATCC 24843) (Fission yeast).